We begin with the raw amino-acid sequence, 276 residues long: Ribosomal RNA small subunit methyltransferase I (276 aa).

This sequence belongs to the methyltransferase superfamily. RsmI family.

The protein localises to the cytoplasm. The catalysed reaction is cytidine(1402) in 16S rRNA + S-adenosyl-L-methionine = 2'-O-methylcytidine(1402) in 16S rRNA + S-adenosyl-L-homocysteine + H(+). Catalyzes the 2'-O-methylation of the ribose of cytidine 1402 (C1402) in 16S rRNA. The sequence is that of Ribosomal RNA small subunit methyltransferase I from Mycoplasma pneumoniae (strain ATCC 29342 / M129 / Subtype 1) (Mycoplasmoides pneumoniae).